The sequence spans 215 residues: Eukaryotic translation initiation factor 4E (215 aa).

Positions 1–27 are disordered; that stretch reads MAERDSEPRVNIIRPDDEPEVEEERVP. Ser-207 is subject to Phosphoserine; by PKC.

Belongs to the eukaryotic initiation factor 4E family. In terms of assembly, eIF4F is a multi-subunit complex, the composition of which varies with external and internal environmental conditions. It is composed of at least eIF4A, eIF4E and eIF4G. eIF4E is also known to interact with other partners. Post-translationally, phosphorylation increases the ability of the protein to bind to mRNA caps and to form the eIF4F complex.

In terms of biological role, recognizes and binds the 7-methylguanosine-containing mRNA cap during an early step in the initiation of protein synthesis and facilitates ribosome binding by inducing the unwinding of the mRNAs secondary structures. The protein is Eukaryotic translation initiation factor 4E of Aplysia californica (California sea hare).